The primary structure comprises 108 residues: Iron-sulfur cluster assembly protein CyaY (108 aa).

It belongs to the frataxin family.

Its function is as follows. Involved in iron-sulfur (Fe-S) cluster assembly. May act as a regulator of Fe-S biogenesis. The protein is Iron-sulfur cluster assembly protein CyaY of Pseudoalteromonas atlantica (strain T6c / ATCC BAA-1087).